The sequence spans 142 residues: Small ribosomal subunit protein uS19 (142 aa).

The protein belongs to the universal ribosomal protein uS19 family. As to quaternary structure, component of the small ribosomal subunit. Mature ribosomes consist of a small (40S) and a large (60S) subunit. The 40S subunit contains about 32 different proteins and 1 molecule of RNA (18S). The 60S subunit contains 45 different proteins and 3 molecules of RNA (25S, 5.8S and 5S).

The protein localises to the cytoplasm. Functionally, component of the ribosome, a large ribonucleoprotein complex responsible for the synthesis of proteins in the cell. The small ribosomal subunit (SSU) binds messenger RNAs (mRNAs) and translates the encoded message by selecting cognate aminoacyl-transfer RNA (tRNA) molecules. The large subunit (LSU) contains the ribosomal catalytic site termed the peptidyl transferase center (PTC), which catalyzes the formation of peptide bonds, thereby polymerizing the amino acids delivered by tRNAs into a polypeptide chain. The nascent polypeptides leave the ribosome through a tunnel in the LSU and interact with protein factors that function in enzymatic processing, targeting, and the membrane insertion of nascent chains at the exit of the ribosomal tunnel. RPS15 has a role in the late stage of the assembly of pre-40S particles within the nucleus and controls their export to the cytoplasm. The chain is Small ribosomal subunit protein uS19 (RPS15) from Candida albicans (strain SC5314 / ATCC MYA-2876) (Yeast).